Reading from the N-terminus, the 682-residue chain is MIDQYKHQQLRIGSVSPQQISAWATKILPNGEIVGEVTKPYTFHYKTNKPEKDGLFCERIFGPIKSGICTCGNYRVIGDKKDEPKFCEQCGVEFVDSRIRRYQMGYIKLACPVTHVWYLKRLPSYIANLLDKPLKELEGLVYCDFSFARPVVKKPTFLRLRGLFEYEIQSWKYSIPLFFATHGFDTFRNREISSGAGAIREQLVDLDLRIVIDSSLVEWKELGEERSTHNENEWEDRKVGRRKNFLVRRMELAKHFIRTNIEPEWMVLCLLPVLPPELRPIIQIDGGKLMSSDINELYRRVIYRNNTLIDLLTTSRSTPGELVMCQEKLVQEAVDTLLDNGIRGQPMKDGHNKVYKSFSDIIEGKEGRFRETLLGKRVDYSGRSVIVVGPSLSLHRCGLPREIAIELFQTFLIRSLIRKHFASNIGVAKSKIREKEPIVWEILQEVMRGHPILLNRAPTLHRLGIQAFQPILVEGRAICLHPLVCKGFNADFDGDQMAIHVPLSLEAQAEARLLMFSHTNLLSPAIGDPIAVPTQDMLIGLYILTSGNRRGICANRYNRSNWKNSKNEKIRDKKYMKKKEPFFSNSYDAIGAFRQKKINFDSPFWLRWRLDKCIMSSREAPIEVHYESLGTYHDIYEHYLVIRSIKKQICCIYIRTTIGHISFYREIEEAIQGFCRGYSYGI.

The Zn(2+) site is built by cysteine 69, cysteine 71, cysteine 87, and cysteine 90. Aspartate 491, aspartate 493, and aspartate 495 together coordinate Mg(2+).

This sequence belongs to the RNA polymerase beta' chain family. RpoC1 subfamily. In plastids the minimal PEP RNA polymerase catalytic core is composed of four subunits: alpha, beta, beta', and beta''. When a (nuclear-encoded) sigma factor is associated with the core the holoenzyme is formed, which can initiate transcription. The cofactor is Mg(2+). Zn(2+) is required as a cofactor.

The protein localises to the plastid. The protein resides in the chloroplast. The catalysed reaction is RNA(n) + a ribonucleoside 5'-triphosphate = RNA(n+1) + diphosphate. DNA-dependent RNA polymerase catalyzes the transcription of DNA into RNA using the four ribonucleoside triphosphates as substrates. In Lotus japonicus (Lotus corniculatus var. japonicus), this protein is DNA-directed RNA polymerase subunit beta'.